Consider the following 476-residue polypeptide: MYTDADRSREVVPEKDGHDKKWRDEFGRDYGRIIHSASFRRQQGKTQVFPSRESDFFRNRLTHSLEVAQIAQGIAERINYDYDKDLGGKIDPRLCATAGLVHDIGHPPFGHNGESALDKAMQRYGGFEGNAQTLRILTRLEKKLRYAEPLAGDDRAGLNLCHRTIAATLKYDNEIPAIRKAADGFVKGYYGSEKIIVDRVKASVLNGYVLGAEEKFCTIECSIMDLADDIAYSVYDLEDCFKVGFLSPAEMLASDDALLSAVAKRASKPMKRTVTINEIQAVFMEIFSEIIEQPAEDADSPLDGIVIEDDIAQQAKRDESLLTFAEAYRTSKVMSEDGYKRTEFSSELVHQFISGVELKAHKECPSLSQIYLPEKLMLRKEVLKQYTFVAAIYAPRVKLGEYRGYDLVTDIFKALMGDRGDLLMPADVRGRIRKAPNVSVKAREVCDFVAGMTDRYAMEFWARLNSDAAESMFKPI.

Residues 1 to 20 (MYTDADRSREVVPEKDGHDK) are disordered. Residues 60-233 (RLTHSLEVAQ…MDLADDIAYS (174 aa)) form the HD domain.

This sequence belongs to the dGTPase family. Type 2 subfamily.

In Mesorhizobium japonicum (strain LMG 29417 / CECT 9101 / MAFF 303099) (Mesorhizobium loti (strain MAFF 303099)), this protein is Deoxyguanosinetriphosphate triphosphohydrolase-like protein 2.